We begin with the raw amino-acid sequence, 338 residues long: Ferredoxin--NADP reductase (338 aa).

FAD-binding residues include Asp35, Gln43, Tyr48, Ala88, Phe122, Asp289, and Thr330.

Belongs to the ferredoxin--NADP reductase type 2 family. Homodimer. FAD serves as cofactor.

It carries out the reaction 2 reduced [2Fe-2S]-[ferredoxin] + NADP(+) + H(+) = 2 oxidized [2Fe-2S]-[ferredoxin] + NADPH. The sequence is that of Ferredoxin--NADP reductase from Ehrlichia chaffeensis (strain ATCC CRL-10679 / Arkansas).